A 467-amino-acid polypeptide reads, in one-letter code: Cysteine--tRNA ligase (467 aa).

Cys29 contacts Zn(2+). The 'HIGH' region motif lies at 31–41 (PTVYNYIHIGN). The Zn(2+) site is built by Cys209, His234, and Glu238. Residues 266–270 (KMSKS) carry the 'KMSKS' region motif. Lys269 contacts ATP. Ser270 carries the phosphoserine modification.

It belongs to the class-I aminoacyl-tRNA synthetase family. In terms of assembly, monomer. It depends on Zn(2+) as a cofactor.

Its subcellular location is the cytoplasm. It catalyses the reaction tRNA(Cys) + L-cysteine + ATP = L-cysteinyl-tRNA(Cys) + AMP + diphosphate. The polypeptide is Cysteine--tRNA ligase (Bacillus licheniformis (strain ATCC 14580 / DSM 13 / JCM 2505 / CCUG 7422 / NBRC 12200 / NCIMB 9375 / NCTC 10341 / NRRL NRS-1264 / Gibson 46)).